Reading from the N-terminus, the 229-residue chain is Lipoprotein-releasing system ATP-binding protein LolD (229 aa).

Residues 6–226 (LELKSVDRHY…TLSDGRVVEL (221 aa)) form the ABC transporter domain. Residue 42 to 49 (APSGTGKS) participates in ATP binding.

The protein belongs to the ABC transporter superfamily. Lipoprotein translocase (TC 3.A.1.125) family. As to quaternary structure, the complex is composed of two ATP-binding proteins (LolD) and two transmembrane proteins (LolC and LolE).

It is found in the cell inner membrane. Functionally, part of the ABC transporter complex LolCDE involved in the translocation of mature outer membrane-directed lipoproteins, from the inner membrane to the periplasmic chaperone, LolA. Responsible for the formation of the LolA-lipoprotein complex in an ATP-dependent manner. This is Lipoprotein-releasing system ATP-binding protein LolD from Chelativorans sp. (strain BNC1).